The primary structure comprises 93 residues: Antitoxin RelF (93 aa).

This sequence belongs to the phD/YefM antitoxin family. As to quaternary structure, interacts with toxin RelG, which neutralizes the toxin. Also interacts with toxins RelE and RelK in vitro, in M.smegmatis coexpression with non-cognate toxins increases the toxicity of RelE but not of RelK.

Its function is as follows. Antitoxin component of a type II toxin-antitoxin (TA) system. Upon expression in M.smegmatis neutralizes the effect of toxin RelE2. Induces its own promoter, in combination with RelG represses its own promoter. Has been seen to bind DNA in complex with toxin RelG but not alone. In Mycobacterium tuberculosis (strain ATCC 25618 / H37Rv), this protein is Antitoxin RelF (relF).